The following is a 914-amino-acid chain: MLEEEYQLDYFKEQGFTRKICKSCGSAFWTRDSSREDCGDAPCVPYSFIGSPVFAPHTVDEMREAFLSFFEKNGHTRIERYPVAARWRDDIYLTIASIADFQPFVTAGVVPPPANPLTISQPCIRLNDLDSVGRSGRHLTTFEMLAHHAFNTPTEEIYWKDRTVELCDQFLASIGGDLNKVTYKEHPWIGGGNAGPSVEVMIGGLEVATLVFMSLGRQKTSHPGYDLNGEKYYPMKLRIVDTGYGLERLVWASKGSPTIYDAVFPDMVSRVMSSAGISHLLENKDYTKILAMNARFAGLMDISGSNLFNLRKKVAAAIEISPEKLDRMITPIEKVYAIVDHTRCLAYMLGDCIVPSNVREGYLARLVIRRTLRMMNEFKMQDTLADLIEEQMKIIGMDKFQQDIAVVREIVDREVEKYAITLDRGTRIVQKVAKSYKAKSQRVPLAEIITLYDSHGIPPEMIKDIAAKEGAVIDLPDNFYSQIADMHSESKKEAAPDKTAGYAERVSALPPTKKLYYEQPGDTEFEAVVIDFFDEYAVLDQTLFYPEGGGQPADTGSLVGSDSMARVDDVIKVGEVILHHISGGVLQRGERVKGMIDEERRFSLMRHHTATHILLHAAKAVLGVHIHQSGAQKGPESSRIDIRHFKHITPDELRKIEIEANRMVMANRPVEISIENRTKAEQEYGFALYQGGVPPGKDLRIVKVAGDIEACAGTHCRSTGEIGAIKILRVEHIQDGIERIEFAAGTAAVYYMQHLEQIAASSADVLSVQLENLPPTVTRFFSEWKDQKKEIERMSQRLVELEIQAIQPESIGGIPVVVKRIDLAPRELSSIATSLSEKGGVALLATPGETARIVLASGDARVNAGDIIGQLCSLLGGKGGGKPQMAQGGGPEVDKLDLALNVGRERIIAALQKK.

Positions 608, 612, 711, and 715 each coordinate Zn(2+).

It belongs to the class-II aminoacyl-tRNA synthetase family. The cofactor is Zn(2+).

The protein localises to the cytoplasm. The enzyme catalyses tRNA(Ala) + L-alanine + ATP = L-alanyl-tRNA(Ala) + AMP + diphosphate. Catalyzes the attachment of alanine to tRNA(Ala) in a two-step reaction: alanine is first activated by ATP to form Ala-AMP and then transferred to the acceptor end of tRNA(Ala). Also edits incorrectly charged Ser-tRNA(Ala) and Gly-tRNA(Ala) via its editing domain. This chain is Alanine--tRNA ligase, found in Methanoregula boonei (strain DSM 21154 / JCM 14090 / 6A8).